A 191-amino-acid chain; its full sequence is Calcium-binding protein CML42 (191 aa).

3 consecutive EF-hand domains span residues 25–60, 116–151, and 154–189; these read LNALRLQRIFDLFDKNGDGFITVEELSQALTRLGLN, ENESDLAEAFKVFDENGDGFISARELQTVLKKLGLP, and GEMERVEKMIVSVDRNQDGRVDFFEFKNMMRTVVIP. 13 residues coordinate Ca(2+): Asp38, Asn40, Asp42, Glu49, Asp129, Asn131, Asp133, Glu140, Asp167, Asn169, Asp171, Arg173, and Glu178.

In terms of assembly, interacts with KIC. As to expression, expressed in seedling shoots, roots, rosette leaves and flowers. Expressed in the leaf trichome support cells.

In terms of biological role, probable calcium sensor that binds calcium in vitro. Involved in the regulation of trichome branching. The polypeptide is Calcium-binding protein CML42 (CML42) (Arabidopsis thaliana (Mouse-ear cress)).